A 173-amino-acid polypeptide reads, in one-letter code: Lipid A deacylase PagL (173 aa).

Positions 1–23 are cleaved as a signal peptide; it reads MKKLLPLAVLAALSSVHVASAQA. Topologically, residues 25 to 28 are periplasmic; the sequence is DVSA. A beta stranded transmembrane segment spans residues 29–32; that stretch reads AVGA. Position 33 (Thr-33) is a topological domain, periplasmic. Residues 34–49 traverse the membrane as a beta stranded segment; that stretch reads GQSGMTYRLGLSWDWD. The Extracellular segment spans residues 50–56; the sequence is KSWWQTS. A beta stranded membrane pass occupies residues 57–71; the sequence is TGRLTGYWDAGYTYW. At 72-73 the chain is on the periplasmic side; sequence EG. Residues 74-89 traverse the membrane as a beta stranded segment; it reads GDEGAGKHSLSFAPVF. Val-90 is a topological domain (extracellular). Residues 91-93 form a beta stranded membrane-spanning segment; the sequence is YEF. The Periplasmic segment spans residues 94–95; the sequence is AG. Residues 96–98 traverse the membrane as a beta stranded segment; that stretch reads DSI. At 99 to 100 the chain is on the extracellular side; the sequence is KP. Residues 101–115 traverse the membrane as a beta stranded segment; that stretch reads FIEAGIGVAAFSGTR. Residues 116–117 lie on the Periplasmic side of the membrane; that stretch reads VG. A beta stranded membrane pass occupies residues 118 to 128; the sequence is DQNLGSSLNFE. Residues 129–138 lie on the Extracellular side of the membrane; it reads DRIGAGLKFA. Residues 139–148 form a beta stranded membrane-spanning segment; sequence NGQSVGVRAI. Residues His-149, Ser-151, and Glu-163 each act as charge relay system in the active site. Residues 149–173 lie on the Periplasmic side of the membrane; that stretch reads HYSNAGLKQPNDGIESYSLFYKIPI.

The protein belongs to the PagL family. In terms of assembly, homodimer.

Its subcellular location is the cell outer membrane. It carries out the reaction a 3-(acyloxy)acyl derivative of bacterial toxin + H2O = a 3-hydroxyacyl derivative of bacterial toxin + a fatty acid + H(+). With respect to regulation, decreased activity at low temperatures (15 or 21 degrees Celsius). In terms of biological role, has lipid A 3-O-deacylase activity. Hydrolyzes the ester bond at the 3 position of lipid A, a bioactive component of lipopolysaccharide (LPS), thereby releasing the primary fatty acyl moiety. Lacks fatty acyl chain-length specificity as removes both 3-OH C10 and 3-OH C14 fatty acids from lipid A. This Pseudomonas aeruginosa (strain ATCC 15692 / DSM 22644 / CIP 104116 / JCM 14847 / LMG 12228 / 1C / PRS 101 / PAO1) protein is Lipid A deacylase PagL.